Consider the following 247-residue polypeptide: Ribosomal RNA large subunit methyltransferase E (247 aa).

The interval 1–21 is disordered; sequence MKKTTKKTAGGYGGSGSHKLY. S-adenosyl-L-methionine contacts are provided by glycine 88, tryptophan 90, aspartate 111, aspartate 127, and aspartate 151. Lysine 191 functions as the Proton acceptor in the catalytic mechanism.

This sequence belongs to the class I-like SAM-binding methyltransferase superfamily. RNA methyltransferase RlmE family.

It is found in the cytoplasm. It carries out the reaction uridine(2552) in 23S rRNA + S-adenosyl-L-methionine = 2'-O-methyluridine(2552) in 23S rRNA + S-adenosyl-L-homocysteine + H(+). Specifically methylates the uridine in position 2552 of 23S rRNA at the 2'-O position of the ribose in the fully assembled 50S ribosomal subunit. The sequence is that of Ribosomal RNA large subunit methyltransferase E from Bartonella henselae (strain ATCC 49882 / DSM 28221 / CCUG 30454 / Houston 1) (Rochalimaea henselae).